Here is a 254-residue protein sequence, read N- to C-terminus: METHHPGAFLLPSYSEMKSSGCQFPTHTPFHKLNPSVLGCHLPSGTPHCISDILSRPLPASHSGMFPGYPTVQGYGSSSVPGTCYGEQGNILTKSGTPYTNQSQGGWTDIEQDWRGGNPALSSASNTEGSSRKKHTRPTFTGHQIFALEKTFEQTKYLAGPERARLAFSLGMSESQVKVWFQNRRTKWRKKSAVETPGLPSLSTRAPGDLIPSDNEDDEYSKPLDPDSDDEKIRLLLRKHRAAFSVLSLASHNL.

2 disordered regions span residues 112–140 and 191–228; these read QDWR…RPTF and KSAV…DPDS. The segment covering 120-129 has biased composition (polar residues); sequence ALSSASNTEG. The segment at residues 133–192 is a DNA-binding region (homeobox); it reads KKHTRPTFTGHQIFALEKTFEQTKYLAGPERARLAFSLGMSESQVKVWFQNRRTKWRKKS.

The protein localises to the nucleus. Functionally, putative transcription factor, which may be involved in patterning of central nervous system and pancreas. This Xenopus laevis (African clawed frog) protein is Homeobox protein Nkx-6.3 (nkx6-3).